Consider the following 265-residue polypeptide: ETS-related transcription factor Elf-5 (265 aa).

Positions 43 to 129 (YPAFEHQTAC…FILQNIRTQG (87 aa)) constitute a PNT domain. Residues 173 to 254 (SHLWEFVRDL…VDRRLVYKFG (82 aa)) constitute a DNA-binding region (ETS).

It belongs to the ETS family. In terms of tissue distribution, expressed exclusively in tissues with a high content of epithelial cells. Highly expressed in salivary gland, mammary gland, kidney and prostate. Weakly expressed in placenta and lung. Isoform 1 and isoform 2 are differentially expressed in different tissues. In the kidney, only isoform 1 was expressed, while prostate expressed both isoforms, with levels of isoform 2 being higher. Expression is up-regulated during keratinocyte differentiation. Several epithelial carcinoma cell lines showed lack of expression.

Its subcellular location is the nucleus. In terms of biological role, transcriptionally activator that may play a role in regulating the later stages of keratinocytes terminal differentiation. Isoform 2 binds to DNA sequences containing the consensus nucleotide core sequence GGA[AT]. Transcriptionally activates SPRR2A and the parotid gland-specific PSP promoters. The protein is ETS-related transcription factor Elf-5 (ELF5) of Homo sapiens (Human).